We begin with the raw amino-acid sequence, 446 residues long: Cytochrome P450 monooxygenase ptmP (446 aa).

Residues 19–39 (VTVIWILMALVLLAYLILPNP) traverse the membrane as a helical segment. Residue Cys-385 coordinates heme. Asn-430 is a glycosylation site (N-linked (GlcNAc...) asparagine).

This sequence belongs to the cytochrome P450 family. The cofactor is heme.

The protein localises to the membrane. Its pathway is secondary metabolite biosynthesis. In terms of biological role, cytochrome P450 monooxygenase; part of the gene cluster that mediates the biosynthesis of the indole diterpenes penitrems. The geranylgeranyl diphosphate (GGPP) synthase ptmG catalyzes the first step in penitrem biosynthesis via conversion of farnesyl pyrophosphate and isopentyl pyrophosphate into geranylgeranyl pyrophosphate (GGPP). Condensation of indole-3-glycerol phosphate with GGPP by the prenyl transferase ptmC then forms 3-geranylgeranylindole (3-GGI). Epoxidation by the FAD-dependent monooxygenase ptmM leads to a epoxidized-GGI that is substrate of the terpene cyclase ptmB for cyclization to yield paspaline. Paspaline is subsequently converted to 13-desoxypaxilline by the cytochrome P450 monooxygenase ptmP, the latter being then converted to paxilline by the cytochrome P450 monooxygenase ptmQ. Paxilline is converted to beta-paxitriol via C-10 ketoreduction by the short-chain dehydrogenase ptmH which can be monoprenylated at the C-20 by the indole diterpene prenyltransferase ptmD. A two-step elimination (acetylation and elimination) process performed by the O-acetyltransferase ptmV and ptmI leads to the production of the prenylated form of penijanthine. The FAD-linked oxidoreductase ptmO then converts the prenylated form of penijanthine into PC-M5 which is in turn transformed into PC-M4 by the aromatic dimethylallyltransferase ptmE. Five sequential oxidative transformations performed by the cytochrome P450 monooxygenases ptmK, ptmU, ptmL, ptmN and ptmJ yield the various penitrem compounds. PtmK, ptmU and ptmM are involved in the formation of the key bicyclic ring of penitrem C via the formation of the intermediates secopenitrem D and penitrem D. PtmL catalyzes the epoxidation of penitrem D and C to yield penitrem B and F, respectively. PtmJ catalyzes the last benzylic hydroxylation to convert penitrem B to prenitrem E and penitrem F to penitrem A. The protein is Cytochrome P450 monooxygenase ptmP of Penicillium ochrochloron.